Here is a 387-residue protein sequence, read N- to C-terminus: 3-ketoacyl-CoA thiolase (387 aa).

Residue C91 is the Acyl-thioester intermediate of the active site. Active-site proton acceptor residues include H343 and C373.

This sequence belongs to the thiolase-like superfamily. Thiolase family. Heterotetramer of two alpha chains (FadB) and two beta chains (FadA).

It is found in the cytoplasm. It catalyses the reaction an acyl-CoA + acetyl-CoA = a 3-oxoacyl-CoA + CoA. It functions in the pathway lipid metabolism; fatty acid beta-oxidation. Catalyzes the final step of fatty acid oxidation in which acetyl-CoA is released and the CoA ester of a fatty acid two carbons shorter is formed. This Shewanella sp. (strain ANA-3) protein is 3-ketoacyl-CoA thiolase.